The following is a 76-amino-acid chain: Bacteriocin uberolysin (76 aa).

The propeptide occupies 1 to 6; the sequence is MDILLE. The cyclopeptide (Leu-Trp) cross-link spans 7 to 76; sequence LAGYTGIASG…RNLKAQAVIW (70 aa).

This sequence belongs to the bacteriocin class V family.

It is found in the secreted. In terms of biological role, cyclopeptide antibiotic with bacteriolytic activity against most streptococci (except S.rattus and S.mutans), Listeria spp., enterococci and staphylococci. The chain is Bacteriocin uberolysin (ublA) from Streptococcus uberis.